Here is a 338-residue protein sequence, read N- to C-terminus: Clavatol oxidase claD (338 aa).

Positions 193-299 constitute a Fe2OG dioxygenase domain; that stretch reads DPMSLLRLLH…RYSVVFFYDG (107 aa). Fe cation contacts are provided by His-222, Asp-224, and His-280. Arg-290 is a binding site for 2-oxoglutarate.

It belongs to the iron/ascorbate-dependent oxidoreductase family. Fe(2+) serves as cofactor.

It catalyses the reaction clavatol + 2-oxoglutarate + O2 = hydroxyclavatol + succinate + CO2. Its pathway is secondary metabolite biosynthesis. 2-oxoglutarate-dependent dioxygenase; part of the cla gene cluster that produces clavatol and ortho-quinone methide. The clavatol biosynthesis cluster cla and the terrestric acid cluster tra are both involved in the production of peniphenones and penilactones. The non-reducing PKS claF is responsible for the formation of clavatol from successive condensations of 3 malonyl-CoA units, presumably with a simple acetyl-CoA starter unit, and 2 methylation steps. The esterase claE probably collaborates with claF by catalyzing the hydrolysis of ACP-bound acyl intermediates to free the ACP from stalled intermediates. The clavatol oxidase claD then converts clavatol to hydroxyclavatol. Spontaneous dehydration of hydroxyclavatol leads to the accumulation of the highly active ortho-quinone methide. On the other hand, the PKS-NRPS hybrid traA is involved in the formation of crustosic acid, with the help of traB and traD. The polyketide synthase module (PKS) of traA is responsible for the synthesis of the polyketide backbone via the condensation of an acetyl-CoA starter unit with 3 malonyl-CoA units. The downstream nonribosomal peptide synthetase (NRPS) module then amidates the carboxyl end of the polyketide with L-malic acid. Because traA lacks a designated enoylreductase (ER) domain, the required activity is provided the enoyl reductase traG. Crustosic acid undergoes decarboxylation and isomerization to the terrestric acid, catalyzed by the 2-oxoglutarate-dependent dioxygenase traH. Both acids are further converted to the 2 gamma-butyrolactones (R)-5-methyltetronic acid and (S)-5-carboxylmethyltetronic acid, with involvement of the cytochrome P450 monooxygenase claJ. Spontaneous addition of the methide to these gamma-butyrolactones leads to peniphenone D and penilactone D, which undergo again stereospecific attacking by methide to give penilactones A and B. The protein is Clavatol oxidase claD of Penicillium crustosum (Blue mold fungus).